Reading from the N-terminus, the 232-residue chain is Translation initiation factor IF-3 (232 aa).

Disordered stretches follow at residues 1–21 (MAIQ…RTNR) and 184–232 (LQSQ…AAQR). Over residues 193–208 (AAAAAAPAAAPAAGAP) the composition is skewed to low complexity. Residues 209–222 (APTPAPAPAAPAPA) are compositionally biased toward pro residues. Positions 223–232 (PAAADPAAQR) are enriched in low complexity.

Belongs to the IF-3 family. Monomer.

The protein resides in the cytoplasm. Functionally, IF-3 binds to the 30S ribosomal subunit and shifts the equilibrium between 70S ribosomes and their 50S and 30S subunits in favor of the free subunits, thus enhancing the availability of 30S subunits on which protein synthesis initiation begins. This chain is Translation initiation factor IF-3, found in Anaeromyxobacter sp. (strain K).